A 247-amino-acid polypeptide reads, in one-letter code: Enolase-phosphatase E1 (247 aa).

Mg(2+) contacts are provided by D12 and E14. Substrate-binding positions include S141–S142 and K175. Mg(2+) is bound at residue D200.

It belongs to the HAD-like hydrolase superfamily. MasA/MtnC family. As to quaternary structure, monomer. Mg(2+) serves as cofactor.

It localises to the cytoplasm. The protein resides in the nucleus. The catalysed reaction is 5-methylsulfanyl-2,3-dioxopentyl phosphate + H2O = 1,2-dihydroxy-5-(methylsulfanyl)pent-1-en-3-one + phosphate. The protein operates within amino-acid biosynthesis; L-methionine biosynthesis via salvage pathway; L-methionine from S-methyl-5-thio-alpha-D-ribose 1-phosphate: step 3/6. It functions in the pathway amino-acid biosynthesis; L-methionine biosynthesis via salvage pathway; L-methionine from S-methyl-5-thio-alpha-D-ribose 1-phosphate: step 4/6. Its function is as follows. Bifunctional enzyme that catalyzes the enolization of 2,3-diketo-5-methylthiopentyl-1-phosphate (DK-MTP-1-P) into the intermediate 2-hydroxy-3-keto-5-methylthiopentenyl-1-phosphate (HK-MTPenyl-1-P), which is then dephosphorylated to form the acireductone 1,2-dihydroxy-3-keto-5-methylthiopentene (DHK-MTPene). The sequence is that of Enolase-phosphatase E1 from Drosophila willistoni (Fruit fly).